We begin with the raw amino-acid sequence, 578 residues long: Probable methylcrotonoyl-CoA carboxylase beta chain, mitochondrial (578 aa).

Residues 1–29 (MIRLNWLFRSSSVLLRSQVRLLHVGDANV) constitute a mitochondrion transit peptide. Residues 48 to 305 (MASLVGDLRN…SATNSYNDQL (258 aa)) form the CoA carboxyltransferase N-terminal domain. The segment at 48–570 (MASLVGDLRN…KAALNNAGQE (523 aa)) is carboxyltransferase. In terms of domain architecture, CoA carboxyltransferase C-terminal spans 321–570 (AVEEPRYDAE…KAALNNAGQE (250 aa)). Residues 355–388 (DGSRFTEFKKLYGETLVCGFAKLYGHTVGIVGNN) are acyl-CoA binding.

The protein belongs to the AccD/PCCB family. Expressed in third instar larval ring gland (lateral and medial secretory cells and corpus cardiacum cells) and CNS.

It is found in the mitochondrion matrix. It catalyses the reaction 3-methylbut-2-enoyl-CoA + hydrogencarbonate + ATP = 3-methyl-(2E)-glutaconyl-CoA + ADP + phosphate + H(+). It functions in the pathway amino-acid degradation; L-leucine degradation; (S)-3-hydroxy-3-methylglutaryl-CoA from 3-isovaleryl-CoA: step 2/3. Functionally, carboxyltransferase subunit of the 3-methylcrotonyl-CoA carboxylase, an enzyme that catalyzes the conversion of 3-methylcrotonyl-CoA to 3-methylglutaconyl-CoA, a critical step for leucine and isovaleric acid catabolism. Vital for adult survival. The chain is Probable methylcrotonoyl-CoA carboxylase beta chain, mitochondrial from Drosophila melanogaster (Fruit fly).